Consider the following 312-residue polypeptide: Isethionate sulfite-lyase activating enzyme (312 aa).

Positions 20 to 304 constitute a Radical SAM core domain; that stretch reads HDGPGIRTIV…GLQKTALDIL (285 aa). Positions 34, 38, 41, 60, 66, 69, 73, 93, 96, 100, and 104 each coordinate [4Fe-4S] cluster. 40-42 is an S-adenosyl-L-methionine binding site; it reads WCS. 2 4Fe-4S ferredoxin-type domains span residues 51 to 83 and 84 to 115; these read AELACNPGRCIDISKCGHCLTACPHGAITCGDD and DKPRIDRSHCADCSIPCAEVCPAQGLLVYGKK. Residues Gly-144, 193-195, and His-267 each bind S-adenosyl-L-methionine; that span reads DIK.

This sequence belongs to the organic radical-activating enzymes family. In terms of assembly, monomer. Requires [4Fe-4S] cluster as cofactor.

It carries out the reaction glycyl-[protein] + reduced [flavodoxin] + S-adenosyl-L-methionine = glycin-2-yl radical-[protein] + semiquinone [flavodoxin] + 5'-deoxyadenosine + L-methionine + H(+). It functions in the pathway organosulfur degradation; alkanesulfonate degradation. Functionally, involved in an anaerobic respiration pathway that converts the sulfonate isethionate (2-hydroxyethanesulfonate) to ammonia, acetate and sulfide. Catalyzes activation of the isethionate sulfite-lyase IslA under anaerobic conditions by generation of an organic free radical on a glycine residue, via a homolytic cleavage of S-adenosyl-L-methionine (SAM). The polypeptide is Isethionate sulfite-lyase activating enzyme (Desulfovibrio desulfuricans (strain ATCC 27774 / DSM 6949 / MB)).